Here is a 466-residue protein sequence, read N- to C-terminus: Serine/threonine-protein kinase SSN3 (466 aa).

In terms of domain architecture, Protein kinase spans 32 to 396; the sequence is YKILGFISSG…ARDALRHPWF (365 aa). 38 to 46 provides a ligand contact to ATP; that stretch reads ISSGTYGRV. The segment at 58–105 is disordered; that stretch reads ASAKSALPSSTRAALSLPKDKLPSPSFTEDSDPLNNPEMCMRPGDRPA. Residue Lys114 participates in ATP binding. The Proton acceptor role is filled by Asp216. The segment at 421–466 is disordered; it reads THEDNGDAKMGSLPQSMAGGRLPSSSNFRPASGNIVQPAARKKARI.

The protein belongs to the protein kinase superfamily. CMGC Ser/Thr protein kinase family. CDC2/CDKX subfamily. As to quaternary structure, component of the SRB8-11 complex, a regulatory module of the Mediator complex. Requires Mg(2+) as cofactor.

It is found in the nucleus. The catalysed reaction is L-seryl-[protein] + ATP = O-phospho-L-seryl-[protein] + ADP + H(+). The enzyme catalyses L-threonyl-[protein] + ATP = O-phospho-L-threonyl-[protein] + ADP + H(+). It catalyses the reaction [DNA-directed RNA polymerase] + ATP = phospho-[DNA-directed RNA polymerase] + ADP + H(+). Its function is as follows. Component of the SRB8-11 complex. The SRB8-11 complex is a regulatory module of the Mediator complex which is itself involved in regulation of basal and activated RNA polymerase II-dependent transcription. The SRB8-11 complex may be involved in the transcriptional repression of a subset of genes regulated by Mediator. It may inhibit the association of the Mediator complex with RNA polymerase II to form the holoenzyme complex. The SRB8-11 complex phosphorylates the C-terminal domain (CTD) of the largest subunit of RNA polymerase II. In Cryptococcus neoformans var. neoformans serotype D (strain B-3501A) (Filobasidiella neoformans), this protein is Serine/threonine-protein kinase SSN3 (SSN3).